The following is a 388-amino-acid chain: Queuine tRNA-ribosyltransferase (388 aa).

Asp90 serves as the catalytic Proton acceptor. Substrate contacts are provided by residues 90-94 (DSGGF), Asp144, Gln205, and Gly232. The interval 263 to 269 (GVGTPED) is RNA binding. Asp282 (nucleophile) is an active-site residue. The tract at residues 287–291 (TRNAR) is RNA binding; important for wobble base 34 recognition. Positions 320, 322, 325, and 351 each coordinate Zn(2+).

It belongs to the queuine tRNA-ribosyltransferase family. Homodimer. Within each dimer, one monomer is responsible for RNA recognition and catalysis, while the other monomer binds to the replacement base PreQ1. Requires Zn(2+) as cofactor.

The catalysed reaction is 7-aminomethyl-7-carbaguanine + guanosine(34) in tRNA = 7-aminomethyl-7-carbaguanosine(34) in tRNA + guanine. It functions in the pathway tRNA modification; tRNA-queuosine biosynthesis. Functionally, catalyzes the base-exchange of a guanine (G) residue with the queuine precursor 7-aminomethyl-7-deazaguanine (PreQ1) at position 34 (anticodon wobble position) in tRNAs with GU(N) anticodons (tRNA-Asp, -Asn, -His and -Tyr). Catalysis occurs through a double-displacement mechanism. The nucleophile active site attacks the C1' of nucleotide 34 to detach the guanine base from the RNA, forming a covalent enzyme-RNA intermediate. The proton acceptor active site deprotonates the incoming PreQ1, allowing a nucleophilic attack on the C1' of the ribose to form the product. After dissociation, two additional enzymatic reactions on the tRNA convert PreQ1 to queuine (Q), resulting in the hypermodified nucleoside queuosine (7-(((4,5-cis-dihydroxy-2-cyclopenten-1-yl)amino)methyl)-7-deazaguanosine). The chain is Queuine tRNA-ribosyltransferase from Campylobacter curvus (strain 525.92).